We begin with the raw amino-acid sequence, 502 residues long: MEFSVKSGSPEKQRSACIVVGVYEPRRLSGIAEQLDKISEGYISNLLRRGDLEGKPGQMLLLHHVPNVLSERVLLVGCGKERELDERQYKQIITKTINTLNETGSMEAVCFLTELHVKGRDTYWKVRQAVETTNSSLYCFDALKTRKGETRRPLRKLVFNVPTRRELTLGERAIEHGMAVSSGMHLCRDVANMPPNICNPAYLASQARQLAEIHENLHVSTVGEEQMAKLGMNSYLAVGRASANESIMTVMEYKGAVDSTEKPIVLIGKGLTFDSGGISLKPGEAMDEMKYDMGGAAGVIGTMKAICEMKLPINVVGILAGCENMPSGNAYRPGDILTTLSGQTVEVLNTDAEGRLVLCDVLTYVERFDPELVIDTATLTGACVIALGKHASGLFSSHNPLAHELLNAGEQSGDRAWRMPLWDEYQDMLDSPFADMTNLGGRPAGAITAACFLSRFAKKYNWAHLDVAGTAWNSGANKGSTGRPVPILTQFLINRAGVELGE.

Residues K269 and D274 each contribute to the Mn(2+) site. K281 is a catalytic residue. Residues D292, D351, and E353 each contribute to the Mn(2+) site. Residue R355 is part of the active site.

It belongs to the peptidase M17 family. It depends on Mn(2+) as a cofactor.

The protein localises to the cytoplasm. It catalyses the reaction Release of an N-terminal amino acid, Xaa-|-Yaa-, in which Xaa is preferably Leu, but may be other amino acids including Pro although not Arg or Lys, and Yaa may be Pro. Amino acid amides and methyl esters are also readily hydrolyzed, but rates on arylamides are exceedingly low.. The catalysed reaction is Release of an N-terminal amino acid, preferentially leucine, but not glutamic or aspartic acids.. In terms of biological role, presumably involved in the processing and regular turnover of intracellular proteins. Catalyzes the removal of unsubstituted N-terminal amino acids from various peptides. The sequence is that of Probable cytosol aminopeptidase 2 (pepA2) from Shewanella oneidensis (strain ATCC 700550 / JCM 31522 / CIP 106686 / LMG 19005 / NCIMB 14063 / MR-1).